A 192-amino-acid chain; its full sequence is Phosphoheptose isomerase (192 aa).

The region spanning 37 to 192 (LADSFKAGGK…IQLIEKEMVK (156 aa)) is the SIS domain. Substrate is bound at residue 52–54 (NGG). Residues histidine 61 and glutamate 65 each coordinate Zn(2+). Residues glutamate 65, 93-94 (ND), 119-121 (STS), serine 124, and glutamine 172 contribute to the substrate site. Zn(2+)-binding residues include glutamine 172 and histidine 180.

Belongs to the SIS family. GmhA subfamily. As to quaternary structure, homotetramer. It depends on Zn(2+) as a cofactor.

The protein resides in the cytoplasm. It carries out the reaction 2 D-sedoheptulose 7-phosphate = D-glycero-alpha-D-manno-heptose 7-phosphate + D-glycero-beta-D-manno-heptose 7-phosphate. It functions in the pathway carbohydrate biosynthesis; D-glycero-D-manno-heptose 7-phosphate biosynthesis; D-glycero-alpha-D-manno-heptose 7-phosphate and D-glycero-beta-D-manno-heptose 7-phosphate from sedoheptulose 7-phosphate: step 1/1. Catalyzes the isomerization of sedoheptulose 7-phosphate in D-glycero-D-manno-heptose 7-phosphate. This is Phosphoheptose isomerase from Escherichia coli O139:H28 (strain E24377A / ETEC).